The primary structure comprises 281 residues: MSKYSDAKELAGLTLGKKTDYANQYDPSLLQPVPRSLNRDDLQLGDELPFMGHDIWTLYELSWLNNKGLPQVAVGEVYIPATSANLIESKSFKLYLNSYNQTRFDSWEEVRQRLITDLSHCAGEAVEVAVNSVTHYTQQPIVTMEGECIDEQDIDISSYDFDDRLLEGAAGEEWVTETLHSHLLKSNCLITNQPDWGSVEIRYQGHKIDREKLLRYLVSFREHNEFHEQCVERIFTDLMKYCQPESLTVFARYTRRGGLDINPYRSTEQAKPDHNHRMARQ.

Position 87–89 (87–89 (IES)) interacts with substrate. Residue 89–90 (SK) participates in NADPH binding. The active-site Thioimide intermediate is the Cys188. Catalysis depends on Asp195, which acts as the Proton donor. A substrate-binding site is contributed by 227-228 (HE). 256 to 257 (RG) provides a ligand contact to NADPH. A disordered region spans residues 261–281 (INPYRSTEQAKPDHNHRMARQ). Positions 268–281 (EQAKPDHNHRMARQ) are enriched in basic and acidic residues.

It belongs to the GTP cyclohydrolase I family. QueF type 2 subfamily. Homodimer.

The protein resides in the cytoplasm. The enzyme catalyses 7-aminomethyl-7-carbaguanine + 2 NADP(+) = 7-cyano-7-deazaguanine + 2 NADPH + 3 H(+). Its pathway is tRNA modification; tRNA-queuosine biosynthesis. In terms of biological role, catalyzes the NADPH-dependent reduction of 7-cyano-7-deazaguanine (preQ0) to 7-aminomethyl-7-deazaguanine (preQ1). In Vibrio vulnificus (strain YJ016), this protein is NADPH-dependent 7-cyano-7-deazaguanine reductase.